A 256-amino-acid chain; its full sequence is Type II phosphatidylinositol 4,5-bisphosphate 4-phosphatase (256 aa).

Positions 1–10 (MAADGIDERS) are enriched in basic and acidic residues. The disordered stretch occupies residues 1–25 (MAADGIDERSPLISPSSGNVTPTAP). Over residues 13 to 22 (ISPSSGNVTP) the composition is skewed to polar residues. C106 is an active-site residue. The CX5R motif motif lies at 106–112 (CKDISRR). Helical transmembrane passes span 191–211 (CCTY…LTVG) and 226–246 (WAVA…WGAI).

It localises to the late endosome membrane. The protein resides in the lysosome membrane. It carries out the reaction a 1,2-diacyl-sn-glycero-3-phospho-(1D-myo-inositol-4,5-bisphosphate) + H2O = a 1,2-diacyl-sn-glycero-3-phospho-(1D-myo-inositol-5-phosphate) + phosphate. In terms of biological role, catalyzes the hydrolysis of phosphatidylinositol-4,5-bisphosphate (PtdIns-4,5-P2) to phosphatidylinositol-4-phosphate (PtdIns-4-P). The chain is Type II phosphatidylinositol 4,5-bisphosphate 4-phosphatase from Xenopus laevis (African clawed frog).